The following is a 326-amino-acid chain: Transmembrane protein PVRIG (326 aa).

The next 3 membrane-spanning stretches (helical) occupy residues 26–46 (LVLPWVLLTLCVTAGTPEVWV), 62–78 (CGFLGSGSISLVTVSWG), and 172–192 (LAGILGVSGVLLFGCVYLLHL). At Tyr233 the chain carries Phosphotyrosine. The disordered stretch occupies residues 296 to 326 (AGERPPHTGPGLTLFPDPRGPRAMEGPLGVR).

Interacts with NECTIN2, hence competing with CD226. In terms of tissue distribution, expressed in some types of immune cells. Expressed at low levels on the surface of freshly isolated T-cells and natural killer (NK) cells, predominantly on CD8+ T-cells (mainly memory/effector, but not naive cells) and on both CD16+ and CD16- NK cells. T-cell expression levels are variable among individuals. Not detected in B-cells, naive or helper T-cells, monocytes, nor neutrophils (at protein level). Not detected in dendritic cells.

The protein resides in the cell membrane. In terms of biological role, cell surface receptor for NECTIN2. May act as a coinhibitory receptor that suppresses T-cell receptor-mediated signals. Following interaction with NECTIN2, inhibits T-cell proliferation. Competes with CD226 for NECTIN2-binding. The polypeptide is Transmembrane protein PVRIG (PVRIG) (Homo sapiens (Human)).